The following is a 197-amino-acid chain: Holliday junction branch migration complex subunit RuvA (197 aa).

Residues 1 to 63 (MFEYLNGKLV…EDAHSLYGFV (63 aa)) form a domain I region. Residues 64–142 (NESEKALFLR…ATGAVGISLL (79 aa)) form a domain II region. Residues 142 to 146 (LDAAP) are flexible linker. The segment at 147–197 (ASNLALEEAIEALQALGYKATELKKIEKKLAQEAGLTSEEYIKSALKLMMK) is domain III.

It belongs to the RuvA family. As to quaternary structure, homotetramer. Forms an RuvA(8)-RuvB(12)-Holliday junction (HJ) complex. HJ DNA is sandwiched between 2 RuvA tetramers; dsDNA enters through RuvA and exits via RuvB. An RuvB hexamer assembles on each DNA strand where it exits the tetramer. Each RuvB hexamer is contacted by two RuvA subunits (via domain III) on 2 adjacent RuvB subunits; this complex drives branch migration. In the full resolvosome a probable DNA-RuvA(4)-RuvB(12)-RuvC(2) complex forms which resolves the HJ.

Its subcellular location is the cytoplasm. The RuvA-RuvB-RuvC complex processes Holliday junction (HJ) DNA during genetic recombination and DNA repair, while the RuvA-RuvB complex plays an important role in the rescue of blocked DNA replication forks via replication fork reversal (RFR). RuvA specifically binds to HJ cruciform DNA, conferring on it an open structure. The RuvB hexamer acts as an ATP-dependent pump, pulling dsDNA into and through the RuvAB complex. HJ branch migration allows RuvC to scan DNA until it finds its consensus sequence, where it cleaves and resolves the cruciform DNA. This chain is Holliday junction branch migration complex subunit RuvA, found in Lactococcus lactis subsp. cremoris (strain MG1363).